Here is a 165-residue protein sequence, read N- to C-terminus: Large ribosomal subunit protein uL10 (165 aa).

It belongs to the universal ribosomal protein uL10 family. Part of the ribosomal stalk of the 50S ribosomal subunit. The N-terminus interacts with L11 and the large rRNA to form the base of the stalk. The C-terminus forms an elongated spine to which L12 dimers bind in a sequential fashion forming a multimeric L10(L12)X complex.

Functionally, forms part of the ribosomal stalk, playing a central role in the interaction of the ribosome with GTP-bound translation factors. This chain is Large ribosomal subunit protein uL10, found in Mycoplasma mycoides subsp. mycoides SC (strain CCUG 32753 / NCTC 10114 / PG1).